We begin with the raw amino-acid sequence, 209 residues long: Small ribosomal subunit protein uS4 (209 aa).

The S4 RNA-binding domain maps to 99–162; it reads RRLDNMVYRL…RKNNKIIEAM (64 aa).

It belongs to the universal ribosomal protein uS4 family. Part of the 30S ribosomal subunit. Contacts protein S5. The interaction surface between S4 and S5 is involved in control of translational fidelity.

Functionally, one of the primary rRNA binding proteins, it binds directly to 16S rRNA where it nucleates assembly of the body of the 30S subunit. In terms of biological role, with S5 and S12 plays an important role in translational accuracy. The polypeptide is Small ribosomal subunit protein uS4 (Syntrophus aciditrophicus (strain SB)).